Consider the following 612-residue polypeptide: MGRLEVLFLGLTCCLAAACAAKLGAVYTEGGFVEGVNKKLSLLGGDSVDIFKGIPFATAKTLENPQRHPGWQGTLKATDFKKRCLQATITQDDTYGQEDCLYLNIWVPQGRKQVSHDLPVMVWIYGGAFLMGSGQGANFLKNYLYDGEEIATRGNVIVVTFNYRVGPLGFLSTGDANLPGNFGLRDQHMAIAWVKRNIAAFGGDPDNITIFGESAGAASVSLQTLSPYNKGLIRRAISQSGVALSPWAIQENPLFWAKTIAKKVGCPTEDTAKMAGCLKITDPRALTLAYRLPLKSQEYPIVHYLAFIPVVDGDFIPDDPINLYDNAADIDYLAGINDMDGHLFATVDVPAIDKAKQDVTEEDFYRLVSGHTVAKGLKGTQATFDIYTESWAQDPSQENMKKTVVAFETDILFLIPTEMALAQHRAHAKSAKTYSYLFSHPSRMPIYPKWMGADHADDLQYVFGKPFATPLGYRAQDRTVSKAMIAYWTNFAKSGDPNMGNSPVPTHWYPYTTENGNYLDINKKITSTSMKEHLREKFLKFWAVTFEMLPTVVGDHTPPEDDSEAAPVPPTDDSQGGPVPPTDDSQTTPVPPTDNSQAGDSVEAQMPGPIGF.

Residues 1-20 (MGRLEVLFLGLTCCLAAACA) form the signal peptide. Cysteine 84 and cysteine 100 are joined by a disulfide. Asparagine 207 is a glycosylation site (N-linked (GlcNAc...) asparagine). Residue serine 214 is the Acyl-ester intermediate of the active site. Cysteines 266 and 277 form a disulfide. Residues aspartate 340 and histidine 455 each act as charge relay system in the active site. Positions 553 to 612 (VGDHTPPEDDSEAAPVPPTDDSQGGPVPPTDDSQTTPVPPTDNSQAGDSVEAQMPGPIGF) are disordered. 4 repeat units span residues 556–566 (HTPPEDDSEAA), 567–577 (PVPPTDDSQGG), 578–588 (PVPPTDDSQTT), and 589–599 (PVPPTDNSQAG). The 4 X 11 AA tandem repeats, O-glycosylated region stretch occupies residues 556–599 (HTPPEDDSEAAPVPPTDDSQGGPVPPTDDSQTTPVPPTDNSQAG). The segment covering 583-599 (DDSQTTPVPPTDNSQAG) has biased composition (polar residues).

Belongs to the type-B carboxylesterase/lipase family. Interacts with CLC. In terms of tissue distribution, synthesized primarily in the pancreas and then transported to the intestine.

It is found in the secreted. It carries out the reaction a triacylglycerol + H2O = a diacylglycerol + a fatty acid + H(+). It catalyses the reaction 1,2,3-tri-(9Z-octadecenoyl)-glycerol + H2O = di-(9Z)-octadecenoylglycerol + (9Z)-octadecenoate + H(+). The catalysed reaction is 1,2,3-trioctanoylglycerol + H2O = dioctanoylglycerol + octanoate + H(+). The enzyme catalyses a sterol ester + H2O = a sterol + a fatty acid + H(+). It carries out the reaction cholesteryl (9Z-octadecenoate) + H2O = cholesterol + (9Z)-octadecenoate + H(+). It catalyses the reaction an acetyl ester + H2O = an aliphatic alcohol + acetate + H(+). The catalysed reaction is a butanoate ester + H2O = an aliphatic alcohol + butanoate + H(+). The enzyme catalyses 9-hexadecanoyloxy-octadecanoate + H2O = 9-hydroxy-octadecanoate + hexadecanoate + H(+). It carries out the reaction 9-(9Z-octadecenoyloxy)-octadecanoate + H2O = 9-hydroxy-octadecanoate + (9Z)-octadecenoate + H(+). It catalyses the reaction 1-hexadecanoyl-sn-glycero-3-phosphocholine + H2O = sn-glycerol 3-phosphocholine + hexadecanoate + H(+). The catalysed reaction is 12-hexadecanoyloxy-octadecanoate + H2O = 12-hydroxyoctadecanoate + hexadecanoate + H(+). The enzyme catalyses 12-(9Z-octadecenoyloxy)-octadecanoate + H2O = 12-hydroxyoctadecanoate + (9Z)-octadecenoate + H(+). It carries out the reaction 13-(9Z-octadecenoyloxy)-octadecanoate + H2O = 13-hydroxy-octadecanoate + (9Z)-octadecenoate + H(+). It catalyses the reaction 9-(9Z-hexadecenoyloxy)-octadecanoate + H2O = (9Z)-hexadecenoate + 9-hydroxy-octadecanoate + H(+). The catalysed reaction is 12-(9Z-hexadecenoyloxy)-octadecanoate + H2O = 12-hydroxyoctadecanoate + (9Z)-hexadecenoate + H(+). The enzyme catalyses 13-(9Z-hexadecenoyloxy)-octadecanoate + H2O = 13-hydroxy-octadecanoate + (9Z)-hexadecenoate + H(+). It carries out the reaction 12-octadecanoyloxy-octadecanoate + H2O = 12-hydroxyoctadecanoate + octadecanoate + H(+). It catalyses the reaction 13-octadecanoyloxy-octadecanoate + H2O = 13-hydroxy-octadecanoate + octadecanoate + H(+). The catalysed reaction is 5-(9Z-hexadecenoyloxy)-octadecanoate + H2O = 5-hydroxy-octadecanoate + (9Z)-hexadecenoate + H(+). The enzyme catalyses 9-octadecanoyloxy-octadecanoate + H2O = 9-hydroxy-octadecanoate + octadecanoate + H(+). With respect to regulation, activated by bile salts such as sodium taurocholate. Its function is as follows. Catalyzes the hydrolysis of a wide range of substrates including cholesteryl esters, phospholipids, lysophospholipids, di- and tri-acylglycerols, and fatty acid esters of hydroxy fatty acids (FAHFA). Preferentially hydrolyzes FAHFAs with the ester bond further away from the carboxylate. Unsaturated FAHFAs are hydrolyzed more quickly than saturated FAHFAs. Has an essential role in the complete digestion of dietary lipids and their intestinal absorption, along with the absorption of fat-soluble vitamins. This Rattus norvegicus (Rat) protein is Bile salt-activated lipase (Cel).